Reading from the N-terminus, the 206-residue chain is Small ribosomal subunit protein uS4 (206 aa).

Residues 25–39 (DKLLDRKPNGPGKER) show a composition bias toward basic and acidic residues. Residues 25 to 49 (DKLLDRKPNGPGKERGARKRGKTSV) form a disordered region. Residues 95–157 (QRLDNTIYRM…KGIQNLIRHN (63 aa)) enclose the S4 RNA-binding domain.

It belongs to the universal ribosomal protein uS4 family. In terms of assembly, part of the 30S ribosomal subunit. Contacts protein S5. The interaction surface between S4 and S5 is involved in control of translational fidelity.

One of the primary rRNA binding proteins, it binds directly to 16S rRNA where it nucleates assembly of the body of the 30S subunit. Its function is as follows. With S5 and S12 plays an important role in translational accuracy. The chain is Small ribosomal subunit protein uS4 from Treponema denticola (strain ATCC 35405 / DSM 14222 / CIP 103919 / JCM 8153 / KCTC 15104).